Consider the following 315-residue polypeptide: tRNA dimethylallyltransferase (315 aa).

ATP is bound at residue G10 to S17. Residue T12–S17 coordinates substrate. Positions D35–Q38 are interaction with substrate tRNA.

This sequence belongs to the IPP transferase family. Monomer. It depends on Mg(2+) as a cofactor.

It catalyses the reaction adenosine(37) in tRNA + dimethylallyl diphosphate = N(6)-dimethylallyladenosine(37) in tRNA + diphosphate. Catalyzes the transfer of a dimethylallyl group onto the adenine at position 37 in tRNAs that read codons beginning with uridine, leading to the formation of N6-(dimethylallyl)adenosine (i(6)A). The protein is tRNA dimethylallyltransferase of Thermoanaerobacter pseudethanolicus (strain ATCC 33223 / 39E) (Clostridium thermohydrosulfuricum).